We begin with the raw amino-acid sequence, 457 residues long: MEGLVTLILAAGLGKRMKSKHPKVVHKVCGKPMIEWVVDAVEEIGSKEVIVVVGHKAEEVKEVLKERVKYAYQEVQLGTGHAVMMAEDLLPEEGNVLILTGDTPLITSNTLKELINFHIKEGNSVTILSSVLEDPTGYGRIIRDKSGNVIRIVEDKDATEEEKSIHEINSAMYVMDIAKLKKALRMITNNNAQGEYYLTDAVEIIRDMDGKIGAFTVPSEEITGVNSRVQLFEAEKIMRKRINYRHMENGVTIVDPDTTYIGAEVEIGADTVVLPGCVIEGKTKIGSDCEIGPNCRIVDSEIGDGCSVTYSVILSSKIKNNVKIGPFAHIRPETVIQSNVKIGDFVEIKKSIIDEGSKVPHLTYVGDAEVGKNVNMGCGSITVNYDGKQKHKTVIGDNVFVGCNVNLVAPVKIGNNAYIAAGSTITEDVPEGALAIARSRQTNKEGWVQERIKKGRL.

Residues 1–228 (MEGLVTLILA…SEEITGVNSR (228 aa)) form a pyrophosphorylase region. UDP-N-acetyl-alpha-D-glucosamine-binding positions include 9–12 (LAAG), Lys23, Gln73, and 78–79 (GT). Residue Asp102 participates in Mg(2+) binding. Residues Gly139, Glu154, Asn169, and Asn226 each contribute to the UDP-N-acetyl-alpha-D-glucosamine site. Residue Asn226 participates in Mg(2+) binding. Residues 229-249 (VQLFEAEKIMRKRINYRHMEN) form a linker region. The interval 250–457 (GVTIVDPDTT…VQERIKKGRL (208 aa)) is N-acetyltransferase. Residues Arg331 and Lys349 each coordinate UDP-N-acetyl-alpha-D-glucosamine. The Proton acceptor role is filled by His361. Tyr364 and Asn375 together coordinate UDP-N-acetyl-alpha-D-glucosamine. Residues 384–385 (NY), Ala421, and Arg438 contribute to the acetyl-CoA site.

It in the N-terminal section; belongs to the N-acetylglucosamine-1-phosphate uridyltransferase family. The protein in the C-terminal section; belongs to the transferase hexapeptide repeat family. As to quaternary structure, homotrimer. The cofactor is Mg(2+).

It is found in the cytoplasm. It catalyses the reaction alpha-D-glucosamine 1-phosphate + acetyl-CoA = N-acetyl-alpha-D-glucosamine 1-phosphate + CoA + H(+). It carries out the reaction N-acetyl-alpha-D-glucosamine 1-phosphate + UTP + H(+) = UDP-N-acetyl-alpha-D-glucosamine + diphosphate. Its pathway is nucleotide-sugar biosynthesis; UDP-N-acetyl-alpha-D-glucosamine biosynthesis; N-acetyl-alpha-D-glucosamine 1-phosphate from alpha-D-glucosamine 6-phosphate (route II): step 2/2. It participates in nucleotide-sugar biosynthesis; UDP-N-acetyl-alpha-D-glucosamine biosynthesis; UDP-N-acetyl-alpha-D-glucosamine from N-acetyl-alpha-D-glucosamine 1-phosphate: step 1/1. It functions in the pathway bacterial outer membrane biogenesis; LPS lipid A biosynthesis. Its function is as follows. Catalyzes the last two sequential reactions in the de novo biosynthetic pathway for UDP-N-acetylglucosamine (UDP-GlcNAc). The C-terminal domain catalyzes the transfer of acetyl group from acetyl coenzyme A to glucosamine-1-phosphate (GlcN-1-P) to produce N-acetylglucosamine-1-phosphate (GlcNAc-1-P), which is converted into UDP-GlcNAc by the transfer of uridine 5-monophosphate (from uridine 5-triphosphate), a reaction catalyzed by the N-terminal domain. The chain is Bifunctional protein GlmU from Thermoanaerobacter pseudethanolicus (strain ATCC 33223 / 39E) (Clostridium thermohydrosulfuricum).